Here is a 225-residue protein sequence, read N- to C-terminus: Uracil-DNA glycosylase (225 aa).

Asp-65 (proton acceptor) is an active-site residue.

The protein belongs to the uracil-DNA glycosylase (UDG) superfamily. UNG family.

Its subcellular location is the cytoplasm. It catalyses the reaction Hydrolyzes single-stranded DNA or mismatched double-stranded DNA and polynucleotides, releasing free uracil.. In terms of biological role, excises uracil residues from the DNA which can arise as a result of misincorporation of dUMP residues by DNA polymerase or due to deamination of cytosine. This Bacillus mycoides (strain KBAB4) (Bacillus weihenstephanensis) protein is Uracil-DNA glycosylase.